We begin with the raw amino-acid sequence, 475 residues long: Ribulose bisphosphate carboxylase large chain (475 aa).

Positions 1–2 (MS) are excised as a propeptide. The residue at position 3 (Pro3) is an N-acetylproline. Lys14 carries the N6,N6,N6-trimethyllysine modification. The substrate site is built by Asn123 and Thr173. Lys175 acts as the Proton acceptor in catalysis. Substrate is bound at residue Lys177. The Mg(2+) site is built by Lys201, Asp203, and Glu204. The residue at position 201 (Lys201) is an N6-carboxylysine. The active-site Proton acceptor is the His294. Arg295, His327, and Ser379 together coordinate substrate.

The protein belongs to the RuBisCO large chain family. Type I subfamily. In terms of assembly, heterohexadecamer of 8 large chains and 8 small chains; disulfide-linked. The disulfide link is formed within the large subunit homodimers. Mg(2+) serves as cofactor. In terms of processing, the disulfide bond which can form in the large chain dimeric partners within the hexadecamer appears to be associated with oxidative stress and protein turnover.

The protein resides in the plastid. It localises to the chloroplast. The enzyme catalyses 2 (2R)-3-phosphoglycerate + 2 H(+) = D-ribulose 1,5-bisphosphate + CO2 + H2O. The catalysed reaction is D-ribulose 1,5-bisphosphate + O2 = 2-phosphoglycolate + (2R)-3-phosphoglycerate + 2 H(+). RuBisCO catalyzes two reactions: the carboxylation of D-ribulose 1,5-bisphosphate, the primary event in carbon dioxide fixation, as well as the oxidative fragmentation of the pentose substrate in the photorespiration process. Both reactions occur simultaneously and in competition at the same active site. The chain is Ribulose bisphosphate carboxylase large chain from Angiopteris evecta (Mule's foot fern).